A 437-amino-acid polypeptide reads, in one-letter code: Coiled-coil domain-containing protein 78 (437 aa).

Coiled coils occupy residues 83–114, 147–287, and 360–408; these read HLRE…LHGN, EELK…QRQE, and QRLQ…YKQE.

This sequence belongs to the CCDC78 family.

The protein resides in the cytoplasm. It is found in the cytoskeleton. Its subcellular location is the microtubule organizing center. The protein localises to the centrosome. It localises to the centriole. The protein resides in the perinuclear region. It is found in the cell membrane. Its subcellular location is the sarcolemma. The protein localises to the sarcoplasmic reticulum. Component of the deuterosome, a structure that promotes de novo centriole amplification in multiciliated cells that can generate more than 100 centrioles. Deuterosome-mediated centriole amplification occurs in terminally differentiated multiciliated cells (G1/0) and not in S phase. Essential for centriole amplification and is required for CEP152 localization to the deuterosome. In Mus musculus (Mouse), this protein is Coiled-coil domain-containing protein 78 (Ccdc78).